The chain runs to 61 residues: Large ribosomal subunit protein eL29y (61 aa).

The segment at 1-61 (MAKSKNHTAH…KSGENAGVEE (61 aa)) is disordered. The span at 15–31 (KAHKNGIKKPRRHRHTP) shows a compositional bias: basic residues.

It belongs to the eukaryotic ribosomal protein eL29 family.

This is Large ribosomal subunit protein eL29y (RPL29B) from Arabidopsis thaliana (Mouse-ear cress).